The following is a 315-amino-acid chain: COMPASS component SWD3 (315 aa).

WD repeat units follow at residues S53–I93, G94–T133, A136–T178, N187–Q228, H238–L278, and H285–V315.

As to quaternary structure, component of the Set1C/COMPASS complex which consists of SET1(2), BRE2(2), SPP1(2), SDC1(1), SHG1(1), SWD1(1), SWD2(1), and SWD3(1).

It is found in the nucleus. The protein localises to the chromosome. The protein resides in the telomere. The COMPASS (Set1C) complex specifically mono-, di- and trimethylates histone H3 to form H3K4me1/2/3, which subsequently plays a role in telomere length maintenance and transcription elongation regulation. COMPASS recognizes ubiquitinated H2B on one face of the nucleosome which stimulates the methylation of H3 on the opposing face. SWD3/CPS30 establishes COMPASS trimethylation activity and may also serve as the anchor point to properly tether and space the other subunits. The sequence is that of COMPASS component SWD3 from Saccharomyces cerevisiae (strain ATCC 204508 / S288c) (Baker's yeast).